We begin with the raw amino-acid sequence, 387 residues long: Alpha-sarcoglycan (387 aa).

Residues 1 to 23 (MAATLTWILLFVGLLAGLRDTKA) form the signal peptide. Residues 24–290 (QQTTLYPLVG…ATGRDFLADA (267 aa)) lie on the Extracellular side of the membrane. 2 N-linked (GlcNAc...) asparagine glycosylation sites follow: N174 and N246. Residues 291-311 (LVTLLVPLLVALLLTLLLAYI) form a helical membrane-spanning segment. Over 312-387 (MCCRREGQLK…AQVPLILDQH (76 aa)) the chain is Cytoplasmic. The residue at position 377 (S377) is a Phosphoserine.

The protein belongs to the sarcoglycan alpha/epsilon family. Interacts with the syntrophin SNTA1. Cross-link to form 2 major subcomplexes: one consisting of SGCB, SGCD and SGCG and the other consisting of SGCB and SGCD. The association between SGCB and SGCG is particularly strong while SGCA is loosely associated with the other sarcoglycans. In terms of tissue distribution, strongly expressed in skeletal and heart muscle.

Its subcellular location is the cell membrane. It localises to the sarcolemma. The protein resides in the cytoplasm. The protein localises to the cytoskeleton. Component of the sarcoglycan complex, a subcomplex of the dystrophin-glycoprotein complex which forms a link between the F-actin cytoskeleton and the extracellular matrix. The polypeptide is Alpha-sarcoglycan (SGCA) (Mesocricetus auratus (Golden hamster)).